Consider the following 331-residue polypeptide: Autoinducer 2 import system permease protein LsrC (331 aa).

A run of 9 helical transmembrane segments spans residues 14–34, 39–59, 70–90, 93–113, 115–135, 157–177, 206–226, 252–272, and 284–304; these read LIAI…YFSL, LVFS…LVML, IAGL…NLPV, LLTL…VTWL, IPAI…MLLL, LNIS…AWIL, IQII…IVFA, GISL…AFFL, and LPAW…LIFD.

It belongs to the binding-protein-dependent transport system permease family. AraH/RbsC subfamily. In terms of assembly, the complex is composed of two ATP-binding proteins (LsrA), two transmembrane proteins (LsrC and LsrD) and a solute-binding protein (LsrB).

The protein resides in the cell inner membrane. In terms of biological role, part of the ABC transporter complex LsrABCD involved in autoinducer 2 (AI-2) import. Probably responsible for the translocation of the substrate across the membrane. The chain is Autoinducer 2 import system permease protein LsrC (lsrC) from Photorhabdus luminescens (Xenorhabdus luminescens).